The primary structure comprises 89 residues: Small ribosomal subunit protein uS14 (89 aa).

It belongs to the universal ribosomal protein uS14 family. Part of the 30S ribosomal subunit. Contacts proteins S3 and S10.

Binds 16S rRNA, required for the assembly of 30S particles and may also be responsible for determining the conformation of the 16S rRNA at the A site. This Cytophaga hutchinsonii (strain ATCC 33406 / DSM 1761 / CIP 103989 / NBRC 15051 / NCIMB 9469 / D465) protein is Small ribosomal subunit protein uS14.